The primary structure comprises 141 residues: Mitochondrial import inner membrane translocase subunit Tim16 (141 aa).

2 disordered regions span residues 34–53 (AARRAGGGKQGDKSAESNLR) and 108–141 (LDHEIKAHEQPRSSNTEAAQDTAEESQSRSRQRR). The J-like stretch occupies residues 60-113 (EAKQILNIDDPKNVDAITKNYEHLFQVNERSKGGSFYIQSKVFRAKERLDHEIK). Residues 108-118 (LDHEIKAHEQP) are compositionally biased toward basic and acidic residues.

It belongs to the TIM16/PAM16 family. In terms of assembly, probable component of the PAM complex at least composed of a mitochondrial HSP70 protein, Roe1, TIM44, blp/TIM16 and TIM14. Associates with the TIM23 complex. As to expression, expressed in distinct cells in the embryonic and larval nervous system.

The protein resides in the mitochondrion inner membrane. Regulates ATP-dependent protein translocation into the mitochondrial matrix. Essential for larval development. This chain is Mitochondrial import inner membrane translocase subunit Tim16 (blp), found in Drosophila melanogaster (Fruit fly).